We begin with the raw amino-acid sequence, 111 residues long: Ig kappa chain V-III region CBPC 101 (111 aa).

The segment at 1-23 is framework-1; sequence DIVLTQSPASLAVSLGQRATISC. A disulfide bridge links Cys-23 with Cys-92. Residues 24–38 form a complementarity-determining-1 region; that stretch reads KASQSVDYTGESYMN. A framework-2 region spans residues 39–53; it reads WYQQNPGQSPKLLIY. A complementarity-determining-2 region spans residues 54–60; it reads AASNLES. The tract at residues 61–92 is framework-3; the sequence is GIPARFSGSGSGTDFTLNIHPVEEEDAATYYC. A complementarity-determining-3 region spans residues 93–101; it reads QQSNEDPYT. The segment at 102 to 111 is framework-4; the sequence is FGGGTKLEIK.

This Mus musculus (Mouse) protein is Ig kappa chain V-III region CBPC 101.